Here is a 483-residue protein sequence, read N- to C-terminus: Glutamyl-tRNA(Gln) amidotransferase subunit A (483 aa).

Residues lysine 75 and serine 150 each act as charge relay system in the active site. Residue serine 174 is the Acyl-ester intermediate of the active site.

It belongs to the amidase family. GatA subfamily. As to quaternary structure, heterotrimer of A, B and C subunits.

It carries out the reaction L-glutamyl-tRNA(Gln) + L-glutamine + ATP + H2O = L-glutaminyl-tRNA(Gln) + L-glutamate + ADP + phosphate + H(+). In terms of biological role, allows the formation of correctly charged Gln-tRNA(Gln) through the transamidation of misacylated Glu-tRNA(Gln) in organisms which lack glutaminyl-tRNA synthetase. The reaction takes place in the presence of glutamine and ATP through an activated gamma-phospho-Glu-tRNA(Gln). In Microcystis aeruginosa (strain NIES-843 / IAM M-2473), this protein is Glutamyl-tRNA(Gln) amidotransferase subunit A.